The following is a 206-amino-acid chain: Ras-related protein RABG3f (206 aa).

15 to 23 (GDSGVGKTS) lines the GTP pocket. Residues 37–45 (YKATIGADF) carry the Effector region motif. Residues 63–67 (DTAGQ), 125–128 (NKVD), and 158–159 (SA) contribute to the GTP site. S-geranylgeranyl cysteine attachment occurs at residues C204 and C206. Cysteine methyl ester is present on C206.

Belongs to the small GTPase superfamily. Rab family. As to quaternary structure, interacts with VPS35A.

It is found in the endosome membrane. It localises to the vacuole membrane. The protein localises to the prevacuolar compartment membrane. Its activity is regulated as follows. Regulated by guanine nucleotide exchange factors (GEFs) which promote the exchange of bound GDP for free GTP. Regulated by the MON1-CCZ1 complex which serves as a link between Rab5 and Rab7 protein families in PVCs and mediates PVC maturation. Essential for trafficking from prevacuolar compartments to vacuoles. Involved in the trafficking of newly synthesized protein to vacuoles. Essential for plant growth. Participates in the recruitment of the core retromer components to the endosomal membrane by interacting with VPS35A. In Arabidopsis thaliana (Mouse-ear cress), this protein is Ras-related protein RABG3f (RABG3F).